The sequence spans 528 residues: Calcium-dependent protein kinase 13 (528 aa).

Gly2 is lipidated: N-myristoyl glycine. Residues 17–32 are compositionally biased toward basic and acidic residues; sequence KSNYSGHDHARKDAAG. The interval 17–37 is disordered; it reads KSNYSGHDHARKDAAGGKKSA. Phosphoserine is present on Ser43. Residues 54–312 enclose the Protein kinase domain; the sequence is YLLDRELGRG…AKQVLEHPWI (259 aa). ATP contacts are provided by residues 60 to 68 and Lys83; that span reads LGRGEFGVT. Asp178 acts as the Proton acceptor in catalysis. Position 218 is a phosphoserine (Ser218). The interval 318 to 348 is autoinhibitory domain; it reads APNVPLGDVVKSRLKQFSVMNRFKRKALRVI. 4 EF-hand domains span residues 355 to 390, 391 to 426, 427 to 462, and 463 to 498; these read EEVE…FSTQ, LAES…LQKV, ANDE…DGGD, and DCVD…GTDW. Ca(2+) contacts are provided by Asp368, Asp370, Asp372, Glu379, Asp404, Thr410, Glu415, Asp440, Asp442, Asn444, Tyr446, Glu451, Asp476, Asp478, Asp480, and Arg482. Ser484 is modified (phosphoserine). Glu487 provides a ligand contact to Ca(2+). The residue at position 522 (Ser522) is a Phosphoserine.

It belongs to the protein kinase superfamily. Ser/Thr protein kinase family. CDPK subfamily.

The protein resides in the cell membrane. The catalysed reaction is L-seryl-[protein] + ATP = O-phospho-L-seryl-[protein] + ADP + H(+). It catalyses the reaction L-threonyl-[protein] + ATP = O-phospho-L-threonyl-[protein] + ADP + H(+). Activated by calcium. Autophosphorylation may play an important role in the regulation of the kinase activity. In terms of biological role, may play a role in signal transduction pathways that involve calcium as a second messenger. The sequence is that of Calcium-dependent protein kinase 13 (CPK13) from Arabidopsis thaliana (Mouse-ear cress).